The following is a 205-amino-acid chain: Large ribosomal subunit protein bL25A (205 aa).

This sequence belongs to the bacterial ribosomal protein bL25 family. CTC subfamily. In terms of assembly, part of the 50S ribosomal subunit; part of the 5S rRNA/L5/L18/L25 subcomplex. Contacts the 5S rRNA. Binds to the 5S rRNA independently of L5 and L18.

Its function is as follows. This is one of the proteins that binds to the 5S RNA in the ribosome where it forms part of the central protuberance. The protein is Large ribosomal subunit protein bL25A of Symbiobacterium thermophilum (strain DSM 24528 / JCM 14929 / IAM 14863 / T).